A 284-amino-acid polypeptide reads, in one-letter code: Peflin (284 aa).

The disordered stretch occupies residues 1 to 111 (MASYPYRQGC…QPGLYGQGGA (111 aa)). The span at 8-26 (QGCPGAAGQAPGAPPGSYY) shows a compositional bias: low complexity. Tandem repeats lie at residues 21-29 (PPGSYYPGP), 31-39 (NSGGQYGSG), 41-49 (PPGGGYGGP), 50-58 (APGGPYGPP), 59-67 (AGGGPYGHP), 76-84 (TPGGPYGGA), 85-92 (APGGPYGQ), 93-100 (PPPSSYGA), and 101-109 (QQPGLYGQG). The 9 X 9 AA approximate tandem repeat of [AP]-P-G-G-P-Y-G-G-P-P stretch occupies residues 21–109 (PPGSYYPGPP…AQQPGLYGQG (89 aa)). Gly residues predominate over residues 34–50 (GQYGSGLPPGGGYGGPA). Over residues 65–75 (GHPNPGMFPSG) the composition is skewed to low complexity. Over residues 76 to 90 (TPGGPYGGAAPGGPY) the composition is skewed to gly residues. EF-hand domains are found at residues 114–149 (NVDP…CNWS), 155–183 (TCLM…WKFI), 181–216 (KFIQ…MGYN), 217–253 (LSPQ…LQVL), and 254–283 (TEAF…ASRM). Positions 127, 129, 131, and 133 each coordinate Ca(2+). A Glycyl lysine isopeptide (Lys-Gly) (interchain with G-Cter in ubiquitin) cross-link involves residue Lys-137. Glu-138 is a binding site for Ca(2+). Ca(2+) contacts are provided by Asp-194, Asp-196, Ser-198, Ser-200, and Glu-205. Residues 204 to 284 (TELQQALSQM…FVTMTASRML (81 aa)) form a required for interaction with PDCD6 region.

In terms of assembly, heterodimer; heterodimerizes (via the EF-hand 5) with PDCD6. Dissociates from PDCD6 in presence of calcium. In terms of processing, ubiquitinated by the BCR(KLHL12) E3 ubiquitin ligase complex.

The protein resides in the cytoplasm. It localises to the endoplasmic reticulum. Its subcellular location is the membrane. It is found in the cytoplasmic vesicle. The protein localises to the COPII-coated vesicle membrane. Functionally, calcium-binding protein that acts as an adapter that bridges unrelated proteins or stabilizes weak protein-protein complexes in response to calcium. Together with PDCD6, acts as a calcium-dependent adapter for the BCR(KLHL12) complex, a complex involved in endoplasmic reticulum (ER)-Golgi transport by regulating the size of COPII coats. In response to cytosolic calcium increase, the heterodimer formed with PDCD6 interacts with, and bridges together the BCR(KLHL12) complex and SEC31 (SEC31A or SEC31B), promoting monoubiquitination of SEC31 and subsequent collagen export, which is required for neural crest specification. Its role in the heterodimer formed with PDCD6 is however unclear: some evidence shows that PEF1 and PDCD6 work together and promote association between PDCD6 and SEC31 in presence of calcium. Other reports show that PEF1 dissociates from PDCD6 in presence of calcium, and may act as a negative regulator of PDCD6. Also acts as a negative regulator of ER-Golgi transport; possibly by inhibiting interaction between PDCD6 and SEC31. The chain is Peflin from Homo sapiens (Human).